The primary structure comprises 260 residues: Snake venom serine protease gussurobin (260 aa).

A signal peptide spans 1–18 (MVLIRVLANLLILQLSYA). The propeptide occupies 19-24 (QKSSEL). A Peptidase S1 domain is found at 25–251 (IIGGDECNIN…YTEWIQSTIA (227 aa)). 6 disulfide bridges follow: cysteine 31-cysteine 165, cysteine 52-cysteine 68, cysteine 100-cysteine 258, cysteine 144-cysteine 212, cysteine 176-cysteine 191, and cysteine 202-cysteine 227. Active-site charge relay system residues include histidine 67 and aspartate 112. N-linked (GlcNAc...) asparagine glycans are attached at residues asparagine 123 and asparagine 124. Residue serine 206 is the Charge relay system of the active site.

The protein belongs to the peptidase S1 family. Snake venom subfamily. As to quaternary structure, monomer. As to expression, expressed by the venom gland.

Its subcellular location is the secreted. Functionally, snake venom serine protease that may act in the hemostasis system of the prey. In Gloydius ussuriensis (Ussuri mamushi), this protein is Snake venom serine protease gussurobin.